We begin with the raw amino-acid sequence, 212 residues long: ATP-dependent dethiobiotin synthetase BioD (212 aa).

13 to 18 provides a ligand contact to ATP; the sequence is GIGKTV. Thr17 serves as a coordination point for Mg(2+). The active site involves Lys33. Residue Ser37 participates in substrate binding. Glu100 contributes to the Mg(2+) binding site. ATP-binding positions include 100–103, 160–161, and 184–186; these read EGAG, IS, and PLL.

This sequence belongs to the dethiobiotin synthetase family. As to quaternary structure, homodimer. The cofactor is Mg(2+).

Its subcellular location is the cytoplasm. It catalyses the reaction (7R,8S)-7,8-diammoniononanoate + CO2 + ATP = (4R,5S)-dethiobiotin + ADP + phosphate + 3 H(+). It functions in the pathway cofactor biosynthesis; biotin biosynthesis; biotin from 7,8-diaminononanoate: step 1/2. Its function is as follows. Catalyzes a mechanistically unusual reaction, the ATP-dependent insertion of CO2 between the N7 and N8 nitrogen atoms of 7,8-diaminopelargonic acid (DAPA, also called 7,8-diammoniononanoate) to form a ureido ring. This Brucella abortus (strain S19) protein is ATP-dependent dethiobiotin synthetase BioD.